The sequence spans 171 residues: Phosphopantetheine adenylyltransferase (171 aa).

Substrate is bound at residue Thr-9. Residues 9-10 and His-17 each bind ATP; that span reads TF. Residues Lys-41, Leu-78, and Arg-92 each contribute to the substrate site. ATP contacts are provided by residues 93–95, Glu-103, and 128–134; these read GLR and HQAIASK.

The protein belongs to the bacterial CoaD family. In terms of assembly, homohexamer. The cofactor is Mg(2+).

It is found in the cytoplasm. It catalyses the reaction (R)-4'-phosphopantetheine + ATP + H(+) = 3'-dephospho-CoA + diphosphate. It participates in cofactor biosynthesis; coenzyme A biosynthesis; CoA from (R)-pantothenate: step 4/5. In terms of biological role, reversibly transfers an adenylyl group from ATP to 4'-phosphopantetheine, yielding dephospho-CoA (dPCoA) and pyrophosphate. The sequence is that of Phosphopantetheine adenylyltransferase from Dinoroseobacter shibae (strain DSM 16493 / NCIMB 14021 / DFL 12).